We begin with the raw amino-acid sequence, 28 residues long: Cyclotide vodo I2 (28 aa).

3 cysteine pairs are disulfide-bonded: C4/C18, C8/C20, and C13/C25.

In terms of processing, this is a cyclic peptide. Contains 3 disulfide bonds.

In terms of biological role, probably participates in a plant defense mechanism. This Viola odorata (Sweet violet) protein is Cyclotide vodo I2.